We begin with the raw amino-acid sequence, 352 residues long: MPGAGTFKLFIGNLDEKTQATELRALFEKYGTVVECDVVKNYGFVHMETEQQGRDAIQNLNGYTLNEFAIKVEAAKSRRAPNTPTTKIFVGNLTDKTRAPEVRELFQKYGTVVECDIVRNYGFVHLDCVGDVQDAIKELNGRVVDGQPLKVQVSTSRVRPKPGMGDPEQCYRCGRSGHWSKECPRLYGSAGGGREPPSPLSAGGYRDRMYGRDPYPPPPPPPPFLRDRIMDGFRDYDYYDRRFEDSRDLYERRYQTSRMRDFPPPPISRREPMPLPPTLSGSLRSCSVSRGYDTMFSRRSPPPPRSSNGMSRYGSPTPHGYEDFSRDAFDERMISSRGMRGPSPPGRRYAPY.

RRM domains are found at residues 7-77 (FKLF…AAKS) and 86-156 (TKIF…VSTS). The CCHC-type zinc finger occupies 168-185 (EQCYRCGRSGHWSKECPR). 2 disordered regions span residues 187–228 (YGSA…LRDR) and 254–352 (YQTS…YAPY). Phosphoserine occurs at positions 198 and 201. Composition is skewed to pro residues over residues 214 to 224 (PYPPPPPPPPF) and 262 to 277 (FPPP…PLPP). A compositionally biased stretch (polar residues) spans 279-288 (LSGSLRSCSV). 2 positions are modified to phosphoserine: Ser315 and Ser325. The span at 320–334 (GYEDFSRDAFDERMI) shows a compositional bias: basic and acidic residues.

Expressed in the CNS and in CCAP neurons of the ventral nervous system (VNS), which control insect ecdysis.

It is found in the cytoplasm. The protein localises to the nucleus. Its function is as follows. Essential RNA-binding protein. May be required for circadian repression of eclosion. Also essential for nurse cell dumping during oogenesis, the process whereby the cytoplasmic contents of nurse cells are transferred to the oocyte late in it's development. This chain is RNA-binding protein lark (lark), found in Drosophila melanogaster (Fruit fly).